The sequence spans 503 residues: Probable cytosol aminopeptidase (503 aa).

Residues Lys270 and Asp275 each contribute to the Mn(2+) site. Lys282 is a catalytic residue. Mn(2+)-binding residues include Asp293, Asp352, and Glu354. Arg356 is a catalytic residue.

Belongs to the peptidase M17 family. Requires Mn(2+) as cofactor.

It localises to the cytoplasm. The enzyme catalyses Release of an N-terminal amino acid, Xaa-|-Yaa-, in which Xaa is preferably Leu, but may be other amino acids including Pro although not Arg or Lys, and Yaa may be Pro. Amino acid amides and methyl esters are also readily hydrolyzed, but rates on arylamides are exceedingly low.. It catalyses the reaction Release of an N-terminal amino acid, preferentially leucine, but not glutamic or aspartic acids.. Functionally, presumably involved in the processing and regular turnover of intracellular proteins. Catalyzes the removal of unsubstituted N-terminal amino acids from various peptides. The chain is Probable cytosol aminopeptidase from Edwardsiella ictaluri (strain 93-146).